The sequence spans 83 residues: Short neurotoxin NCA-02/NCA-05/UER-05 (83 aa).

An N-terminal signal peptide occupies residues 1-21 (MKTLLLTLVVVTMVCLDLGYT). Cystine bridges form between C24–C45, C38–C62, C64–C75, and C76–C81.

This sequence belongs to the three-finger toxin family. Short-chain subfamily. Type I alpha-neurotoxin sub-subfamily. As to expression, expressed by the venom gland.

It is found in the secreted. Functionally, binds to muscle nicotinic acetylcholine receptor (nAChR) and inhibit acetylcholine from binding to the receptor, thereby impairing neuromuscular transmission. The polypeptide is Short neurotoxin NCA-02/NCA-05/UER-05 (Laticauda colubrina (Yellow-lipped sea krait)).